The following is a 126-amino-acid chain: Holo-[acyl-carrier-protein] synthase (126 aa).

Asp-9 and Glu-58 together coordinate Mg(2+).

This sequence belongs to the P-Pant transferase superfamily. AcpS family. Mg(2+) is required as a cofactor.

The protein resides in the cytoplasm. The catalysed reaction is apo-[ACP] + CoA = holo-[ACP] + adenosine 3',5'-bisphosphate + H(+). Functionally, transfers the 4'-phosphopantetheine moiety from coenzyme A to a Ser of acyl-carrier-protein. This Pectobacterium atrosepticum (strain SCRI 1043 / ATCC BAA-672) (Erwinia carotovora subsp. atroseptica) protein is Holo-[acyl-carrier-protein] synthase.